Here is a 489-residue protein sequence, read N- to C-terminus: UDP-N-acetylmuramate--L-alanine ligase (489 aa).

Residue 130–136 (GTHGKTS) participates in ATP binding.

The protein belongs to the MurCDEF family.

Its subcellular location is the cytoplasm. It carries out the reaction UDP-N-acetyl-alpha-D-muramate + L-alanine + ATP = UDP-N-acetyl-alpha-D-muramoyl-L-alanine + ADP + phosphate + H(+). It participates in cell wall biogenesis; peptidoglycan biosynthesis. Its function is as follows. Cell wall formation. In Corynebacterium efficiens (strain DSM 44549 / YS-314 / AJ 12310 / JCM 11189 / NBRC 100395), this protein is UDP-N-acetylmuramate--L-alanine ligase.